The following is a 367-amino-acid chain: uncharacterized protein (367 aa).

Positions 4-234 constitute an ABC transporter domain; the sequence is LTFEHVKKSY…PANLFVAGFI (231 aa). 36 to 43 lines the ATP pocket; it reads GPSGCGKS.

The protein belongs to the ABC transporter superfamily.

This is an uncharacterized protein from Bacillus subtilis (strain 168).